The following is a 511-amino-acid chain: Archaeal glutamate synthase [NADPH] (511 aa).

2 4Fe-4S ferredoxin-type domains span residues 15-44 and 46-75; these read FMIE…YDEE and DMMR…VKPH. [4Fe-4S] cluster-binding residues include Cys24, Cys27, Cys30, Cys34, Cys55, Cys58, Cys61, and Cys65.

This sequence belongs to the glutamate synthase family. FMN serves as cofactor.

The catalysed reaction is 2 L-glutamate + NADP(+) = L-glutamine + 2-oxoglutarate + NADPH + H(+). The chain is Archaeal glutamate synthase [NADPH] from Archaeoglobus fulgidus (strain ATCC 49558 / DSM 4304 / JCM 9628 / NBRC 100126 / VC-16).